We begin with the raw amino-acid sequence, 278 residues long: Ribosomal RNA small subunit methyltransferase A (278 aa).

6 residues coordinate S-adenosyl-L-methionine: asparagine 27, leucine 29, glycine 54, glutamate 75, aspartate 101, and asparagine 122.

Belongs to the class I-like SAM-binding methyltransferase superfamily. rRNA adenine N(6)-methyltransferase family. RsmA subfamily.

It localises to the cytoplasm. The catalysed reaction is adenosine(1518)/adenosine(1519) in 16S rRNA + 4 S-adenosyl-L-methionine = N(6)-dimethyladenosine(1518)/N(6)-dimethyladenosine(1519) in 16S rRNA + 4 S-adenosyl-L-homocysteine + 4 H(+). Functionally, specifically dimethylates two adjacent adenosines (A1518 and A1519) in the loop of a conserved hairpin near the 3'-end of 16S rRNA in the 30S particle. May play a critical role in biogenesis of 30S subunits. The protein is Ribosomal RNA small subunit methyltransferase A of Brucella anthropi (strain ATCC 49188 / DSM 6882 / CCUG 24695 / JCM 21032 / LMG 3331 / NBRC 15819 / NCTC 12168 / Alc 37) (Ochrobactrum anthropi).